A 293-amino-acid chain; its full sequence is Methylsterol monooxygenase 1 (293 aa).

The next 2 membrane-spanning stretches (helical) occupy residues Leu-55–Ile-75 and Val-100–Thr-120. The Fatty acid hydroxylase domain maps to Cys-145–Thr-274. Positions His-157–His-161 match the Histidine box-1 motif. Residues His-170–His-174 carry the Histidine box-2 motif. A helical membrane pass occupies residues Phe-199–Ile-219. The Histidine box-3 motif lies at His-249–Met-255.

The protein belongs to the sterol desaturase family. It depends on Fe cation as a cofactor. Post-translationally, ubiquitinated by MARCHF6, leading to proteasomal degradation.

The protein localises to the endoplasmic reticulum membrane. The catalysed reaction is 4,4-dimethyl-5alpha-cholest-7-en-3beta-ol + 6 Fe(II)-[cytochrome b5] + 3 O2 + 5 H(+) = 4alpha-carboxy-4beta-methyl-5alpha-cholest-7-ene-3beta-ol + 6 Fe(III)-[cytochrome b5] + 4 H2O. The enzyme catalyses 4,4-dimethyl-5alpha-cholesta-8,24-dien-3beta-ol + 6 Fe(II)-[cytochrome b5] + 3 O2 + 5 H(+) = 4beta-methylzymosterol-4alpha-carboxylate + 6 Fe(III)-[cytochrome b5] + 4 H2O. It catalyses the reaction 4alpha-methylzymosterol + 6 Fe(II)-[cytochrome b5] + 3 O2 + 5 H(+) = 4alpha-carboxyzymosterol + 6 Fe(III)-[cytochrome b5] + 4 H2O. It carries out the reaction 4alpha-methyl-5alpha-cholest-7-en-3beta-ol + 6 Fe(II)-[cytochrome b5] + 3 O2 + 5 H(+) = 4alpha-carboxy-5alpha-cholest-7-en-3beta-ol + 6 Fe(III)-[cytochrome b5] + 4 H2O. The catalysed reaction is 4,4-dimethyl-5alpha-cholest-8-en-3beta-ol + 6 Fe(II)-[cytochrome b5] + 3 O2 + 5 H(+) = 4alpha-carboxy-4beta-methyl-5alpha-cholest-8-en-3beta-ol + 6 Fe(III)-[cytochrome b5] + 4 H2O. The enzyme catalyses 4alpha-methyl-5alpha-cholest-8-en-3beta-ol + 6 Fe(II)-[cytochrome b5] + 3 O2 + 5 H(+) = 4alpha-carboxy-5alpha-cholest-8-ene-3beta-ol + 6 Fe(III)-[cytochrome b5] + 4 H2O. It participates in steroid biosynthesis; zymosterol biosynthesis; zymosterol from lanosterol: step 3/6. The protein operates within steroid biosynthesis; cholesterol biosynthesis. Catalyzes the three-step monooxygenation required for the demethylation of 4,4-dimethyl and 4alpha-methylsterols, which can be subsequently metabolized to cholesterol. The sequence is that of Methylsterol monooxygenase 1 (MSMO1) from Pongo abelii (Sumatran orangutan).